The primary structure comprises 282 residues: MSLFEAIILGIAQGLTEFLPISSTAHLRIVPALAGWQDPGAAFTAIVQIGTLIAVLIYFFRDIVTISGAVIKGLMNASPLGTPDAKMGWMIAAGTIPIVVFGLLFKTEIETSLRSLYWISAALITLAIILSLAEWLIKKRIAKGIEPKSMSDIRWKEALIIGLVQSIALIPGSSRSGVTITGGLFMNLSRETAARFSFLLSLPAVFAAGIYQLYKSWDSLMASTNDLVNLIVATLVAGIVGYASIAFLITFLKQHSTAVFIIYRIALGLTILALIATGNVQA.

7 consecutive transmembrane segments (helical) span residues 40–60 (GAAF…IYFF), 85–105 (AKMG…GLLF), 117–137 (YWIS…EWLI), 158–178 (ALII…RSGV), 193–213 (AARF…IYQL), 231–251 (IVAT…LITF), and 258–278 (AVFI…IATG).

The protein belongs to the UppP family.

The protein localises to the cell inner membrane. It carries out the reaction di-trans,octa-cis-undecaprenyl diphosphate + H2O = di-trans,octa-cis-undecaprenyl phosphate + phosphate + H(+). Catalyzes the dephosphorylation of undecaprenyl diphosphate (UPP). Confers resistance to bacitracin. The chain is Undecaprenyl-diphosphatase from Prosthecochloris aestuarii (strain DSM 271 / SK 413).